Here is a 222-residue protein sequence, read N- to C-terminus: Deoxyribose-phosphate aldolase (222 aa).

The Proton donor/acceptor role is filled by D92. K156 acts as the Schiff-base intermediate with acetaldehyde in catalysis. K185 (proton donor/acceptor) is an active-site residue.

This sequence belongs to the DeoC/FbaB aldolase family. DeoC type 1 subfamily. Homodimer.

The protein localises to the cytoplasm. The catalysed reaction is 2-deoxy-D-ribose 5-phosphate = D-glyceraldehyde 3-phosphate + acetaldehyde. Its pathway is carbohydrate degradation; 2-deoxy-D-ribose 1-phosphate degradation; D-glyceraldehyde 3-phosphate and acetaldehyde from 2-deoxy-alpha-D-ribose 1-phosphate: step 2/2. Shows high stability to high concentrations of acetaldehyde. In terms of biological role, catalyzes a reversible aldol reaction between acetaldehyde and D-glyceraldehyde 3-phosphate to generate 2-deoxy-D-ribose 5-phosphate. The sequence is that of Deoxyribose-phosphate aldolase from Aciduliprofundum boonei (strain DSM 19572 / T469).